We begin with the raw amino-acid sequence, 171 residues long: S-ribosylhomocysteine lyase (171 aa).

Fe cation contacts are provided by His54, His58, and Cys128.

The protein belongs to the LuxS family. As to quaternary structure, homodimer. Fe cation is required as a cofactor.

It catalyses the reaction S-(5-deoxy-D-ribos-5-yl)-L-homocysteine = (S)-4,5-dihydroxypentane-2,3-dione + L-homocysteine. Functionally, involved in the synthesis of autoinducer 2 (AI-2) which is secreted by bacteria and is used to communicate both the cell density and the metabolic potential of the environment. The regulation of gene expression in response to changes in cell density is called quorum sensing. Catalyzes the transformation of S-ribosylhomocysteine (RHC) to homocysteine (HC) and 4,5-dihydroxy-2,3-pentadione (DPD). The protein is S-ribosylhomocysteine lyase of Salmonella typhi.